A 422-amino-acid chain; its full sequence is Histidine--tRNA ligase (422 aa).

The protein belongs to the class-II aminoacyl-tRNA synthetase family. Homodimer.

It localises to the cytoplasm. It carries out the reaction tRNA(His) + L-histidine + ATP = L-histidyl-tRNA(His) + AMP + diphosphate + H(+). The chain is Histidine--tRNA ligase from Vibrio parahaemolyticus serotype O3:K6 (strain RIMD 2210633).